A 232-amino-acid polypeptide reads, in one-letter code: C4-dicarboxylate TRAP transporter small permease protein DctQ (232 aa).

Transmembrane regions (helical) follow at residues 30 to 50 (EFLI…NVIM), 58 to 78 (ILWA…VGAS), 103 to 123 (LYAL…LIGS), and 167 to 187 (FIPY…FLQI).

This sequence belongs to the TRAP transporter small permease family. In terms of assembly, the complex comprises the extracytoplasmic solute receptor protein DctP, and the two transmembrane proteins DctQ and DctM.

The protein resides in the cell inner membrane. Its function is as follows. Part of the tripartite ATP-independent periplasmic (TRAP) transport system DctPQM involved in C4-dicarboxylates uptake. This is C4-dicarboxylate TRAP transporter small permease protein DctQ from Vibrio cholerae serotype O1 (strain ATCC 39315 / El Tor Inaba N16961).